Here is a 108-residue protein sequence, read N- to C-terminus: MATLKIKKGDTVQIITGKDRGLKGKVIRAYPEQNKVLVEGANRITRHTRVQQGTRGSQSGGIITQEAPIHVSNVMIVDPSDGKPTRIGYRINDDGTKVRVSRRTGTEL.

It belongs to the universal ribosomal protein uL24 family. As to quaternary structure, part of the 50S ribosomal subunit.

Functionally, one of two assembly initiator proteins, it binds directly to the 5'-end of the 23S rRNA, where it nucleates assembly of the 50S subunit. In terms of biological role, one of the proteins that surrounds the polypeptide exit tunnel on the outside of the subunit. This Frankia casuarinae (strain DSM 45818 / CECT 9043 / HFP020203 / CcI3) protein is Large ribosomal subunit protein uL24.